Here is a 444-residue protein sequence, read N- to C-terminus: Endothelin-3 receptor (444 aa).

The first 18 residues, 1-18 (MATVILFVAWMACLMVGV), serve as a signal peptide directing secretion. Residues 19-88 (CYQEFQTQQN…SRAKIRHAFK (70 aa)) are Extracellular-facing. A glycan (N-linked (GlcNAc...) asparagine) is linked at asparagine 60. A helical membrane pass occupies residues 89-113 (YVTTILSCVIFLVGIVGNSTLLRII). The Cytoplasmic segment spans residues 114-124 (YKNKCMRNGPN). Residues 125 to 145 (VLIASLALGDLFYILIAIPII) form a helical membrane-spanning segment. Topologically, residues 146–161 (SISFWLSTGHSEYIYQ) are extracellular. The chain crosses the membrane as a helical span at residues 162-180 (LVHLYRARVYSLSLCALSI). Topologically, residues 181–201 (DRYRAVASWNRIRSIGIPVRK) are cytoplasmic. A helical transmembrane segment spans residues 202–226 (AIELTLIWAVAIIVAVPEAIAFNLV). At 227 to 254 (ELDFRGQTILVCMLPMEQTSDFMRFYQE) the chain is on the extracellular side. The chain crosses the membrane as a helical span at residues 255 to 279 (VKVWWLFGFYFCLPLACTGVFYTLM). Residues 280 to 307 (SCEMLSIKNGMRIALNDHMKQRREVAKT) lie on the Cytoplasmic side of the membrane. The chain crosses the membrane as a helical span at residues 308-328 (VFCLVVIFALCWLPLHVSSIF). The Extracellular portion of the chain corresponds to 329–365 (VRLSATVKRACILKNKRSCIMAEIQTGVNYQLLMVMN). A helical membrane pass occupies residues 366–386 (YTGINMASLNSCIGPVALYFV). The Cytoplasmic portion of the chain corresponds to 387–444 (SRKFKNCFQSCLCCWCHRPTLTITPMDEKGSGGKWKANGHDLDLDRSSSRLSNKYSSS). Residues 416-444 (GSGGKWKANGHDLDLDRSSSRLSNKYSSS) are disordered. Basic and acidic residues predominate over residues 424 to 434 (NGHDLDLDRSS). Residues 435-444 (SRLSNKYSSS) show a composition bias toward low complexity.

It belongs to the G-protein coupled receptor 1 family. Endothelin receptor subfamily.

The protein localises to the cell membrane. Functionally, receptor for endothelin-3. Mediates its action by association with G proteins that activate a phosphatidylinositol-calcium second messenger system. The protein is Endothelin-3 receptor of Xenopus laevis (African clawed frog).